The sequence spans 66 residues: MDLSRINTRKSKQLKSFLSSKDTFKADVHGHSALYYAIADNNMRLVCTLLNAGALKNLLENEFPLH.

Residues 29 to 58 form an ANK repeat; it reads HGHSALYYAIADNNMRLVCTLLNAGALKNL.

It belongs to the orthopoxvirus OPG039 family.

This chain is Truncated interferon antagonist OPG039 (OPG040), found in Homo sapiens (Human).